The sequence spans 274 residues: Rhamnulose-1-phosphate aldolase (274 aa).

Residue Glu-117 is part of the active site. His-141, His-143, and His-212 together coordinate Zn(2+).

This sequence belongs to the aldolase class II family. RhaD subfamily. Homotetramer. Zn(2+) is required as a cofactor.

It localises to the cytoplasm. The catalysed reaction is L-rhamnulose 1-phosphate = (S)-lactaldehyde + dihydroxyacetone phosphate. It functions in the pathway carbohydrate degradation; L-rhamnose degradation; glycerone phosphate from L-rhamnose: step 3/3. Functionally, catalyzes the reversible cleavage of L-rhamnulose-1-phosphate to dihydroxyacetone phosphate (DHAP) and L-lactaldehyde. The sequence is that of Rhamnulose-1-phosphate aldolase from Pectobacterium carotovorum subsp. carotovorum (strain PC1).